We begin with the raw amino-acid sequence, 27 residues long: L-amino-acid oxidase (27 aa).

As to quaternary structure, homodimer; non-covalently linked. FAD is required as a cofactor. Post-translationally, contains 2 disulfide bonds. N-glycosylated. Expressed by the venom gland.

It is found in the secreted. It catalyses the reaction an L-alpha-amino acid + O2 + H2O = a 2-oxocarboxylate + H2O2 + NH4(+). The enzyme catalyses L-leucine + O2 + H2O = 4-methyl-2-oxopentanoate + H2O2 + NH4(+). In terms of biological role, catalyzes an oxidative deamination of predominantly hydrophobic and aromatic L-amino acids, thus producing hydrogen peroxide that may contribute to the diverse toxic effects of this enzyme. Shows activity on L-Leu. Exhibits diverse biological activities, such as hemolysis, edema, apoptosis, as well as induction of platelet aggregation. Effects of snake L-amino oxidases on platelets are controversial, since they either induce aggregation or inhibit agonist-induced aggregation. These different effects are probably due to different experimental conditions. Unlike other snake venom L-amino acid oxidases, does not induce hemorrhage. This protein may also have antibacterial and antiparasitic activities. This is L-amino-acid oxidase from Eristicophis macmahoni (Leaf-nosed viper).